Here is a 95-residue protein sequence, read N- to C-terminus: Large ribosomal subunit protein eL37z (95 aa).

Zn(2+) is bound by residues C19, C22, C34, and C37. Residues 19–37 (CVRCGRRSFHIQKSRCSAC) form a C4-type zinc finger.

Belongs to the eukaryotic ribosomal protein eL37 family. Requires Zn(2+) as cofactor.

In terms of biological role, binds to the 23S rRNA. In Arabidopsis thaliana (Mouse-ear cress), this protein is Large ribosomal subunit protein eL37z (RPL37A).